The following is a 221-amino-acid chain: Max dimerization protein 1 (221 aa).

The Nuclear localization signal motif lies at Arg-21–Lys-49. Disordered regions lie at residues Gly-29–Arg-67 and Ser-178–Leu-221. The 53-residue stretch at Ser-55–Leu-107 folds into the bHLH domain. Positions Met-193 to Leu-221 are enriched in polar residues.

As to quaternary structure, heterodimer with MAX; the interaction is required for DNA-binding. DNA binding requires dimerization with another bHLH protein; does not form homodimers, and does not bind to DNA in the absence of MAX in vitro. Expressed primarily in cells that have undergone terminal differentiation including notochord, floor plate and cement gland.

Its subcellular location is the nucleus. Component of a transcriptional repressor complex together with MAX. In complex with MAX binds to the core DNA sequence 5'-CAC[GA]TG-3'. Antagonizes MYC transcriptional activity by competing with MYC for MAX binding. Binds to the TERT promoter and represses telomerase expression, possibly by interfering with MYC binding. The polypeptide is Max dimerization protein 1 (mxd1) (Xenopus laevis (African clawed frog)).